A 264-amino-acid polypeptide reads, in one-letter code: Thymidylate synthase (264 aa).

Residue arginine 21 participates in dUMP binding. A (6R)-5,10-methylene-5,6,7,8-tetrahydrofolate-binding site is contributed by histidine 51. 126 to 127 (RR) is a binding site for dUMP. The active-site Nucleophile is cysteine 146. DUMP is bound by residues 166-169 (RSCD), asparagine 177, and 207-209 (HLY). Aspartate 169 contacts (6R)-5,10-methylene-5,6,7,8-tetrahydrofolate. Alanine 263 is a binding site for (6R)-5,10-methylene-5,6,7,8-tetrahydrofolate.

The protein belongs to the thymidylate synthase family. Bacterial-type ThyA subfamily. In terms of assembly, homodimer.

It localises to the cytoplasm. The catalysed reaction is dUMP + (6R)-5,10-methylene-5,6,7,8-tetrahydrofolate = 7,8-dihydrofolate + dTMP. The protein operates within pyrimidine metabolism; dTTP biosynthesis. Its function is as follows. Catalyzes the reductive methylation of 2'-deoxyuridine-5'-monophosphate (dUMP) to 2'-deoxythymidine-5'-monophosphate (dTMP) while utilizing 5,10-methylenetetrahydrofolate (mTHF) as the methyl donor and reductant in the reaction, yielding dihydrofolate (DHF) as a by-product. This enzymatic reaction provides an intracellular de novo source of dTMP, an essential precursor for DNA biosynthesis. The chain is Thymidylate synthase from Hamiltonella defensa subsp. Acyrthosiphon pisum (strain 5AT).